Consider the following 115-residue polypeptide: Class I hydrophobin 21 (115 aa).

An N-terminal signal peptide occupies residues 1-20 (MFAAPATMLVLAALAALSSA). 4 disulfides stabilise this stretch: cysteine 30-cysteine 93, cysteine 37-cysteine 87, cysteine 38-cysteine 77, and cysteine 94-cysteine 107.

This sequence belongs to the fungal hydrophobin family. In terms of assembly, self-assembles to form functional amyloid fibrils called rodlets. Self-assembly into fibrillar rodlets occurs spontaneously at hydrophobic:hydrophilic interfaces and the rodlets further associate laterally to form amphipathic monolayers.

The protein resides in the secreted. It localises to the cell wall. Its function is as follows. Aerial growth, conidiation, and dispersal of filamentous fungi in the environment rely upon a capability of their secreting small amphipathic proteins called hydrophobins (HPBs) with low sequence identity. Class I can self-assemble into an outermost layer of rodlet bundles on aerial cell surfaces, conferring cellular hydrophobicity that supports fungal growth, development and dispersal; whereas Class II form highly ordered films at water-air interfaces through intermolecular interactions but contribute nothing to the rodlet structure. The polypeptide is Class I hydrophobin 21 (Pleurotus ostreatus (strain PC15) (Oyster mushroom)).